The following is a 302-amino-acid chain: Putative S-adenosyl-L-methionine-dependent methyltransferase MAP_1622c (302 aa).

Residues D129 and 158–159 (DL) contribute to the S-adenosyl-L-methionine site.

The protein belongs to the UPF0677 family.

Functionally, exhibits S-adenosyl-L-methionine-dependent methyltransferase activity. This Mycolicibacterium paratuberculosis (strain ATCC BAA-968 / K-10) (Mycobacterium paratuberculosis) protein is Putative S-adenosyl-L-methionine-dependent methyltransferase MAP_1622c.